A 334-amino-acid polypeptide reads, in one-letter code: Anthranilate phosphoribosyltransferase (334 aa).

Residues Gly-79, 82-83 (GD), Ser-87, 89-92 (NIST), 107-115 (KAGNRSISS), and Ser-119 contribute to the 5-phospho-alpha-D-ribose 1-diphosphate site. Residue Gly-79 participates in anthranilate binding. Ser-91 lines the Mg(2+) pocket. Asn-110 provides a ligand contact to anthranilate. Arg-165 contributes to the anthranilate binding site. The Mg(2+) site is built by Asp-224 and Glu-225.

The protein belongs to the anthranilate phosphoribosyltransferase family. Homodimer. Mg(2+) is required as a cofactor.

It carries out the reaction N-(5-phospho-beta-D-ribosyl)anthranilate + diphosphate = 5-phospho-alpha-D-ribose 1-diphosphate + anthranilate. Its pathway is amino-acid biosynthesis; L-tryptophan biosynthesis; L-tryptophan from chorismate: step 2/5. Functionally, catalyzes the transfer of the phosphoribosyl group of 5-phosphorylribose-1-pyrophosphate (PRPP) to anthranilate to yield N-(5'-phosphoribosyl)-anthranilate (PRA). This is Anthranilate phosphoribosyltransferase from Streptococcus thermophilus (strain CNRZ 1066).